Here is a 154-residue protein sequence, read N- to C-terminus: MSAPVILVDADACPVKEEIYRVAWRHGAKVKVVSNSRLRVPDHPLIERVVVSDGFDAADDWIAEAANAQSIVVTADILLADRALKAGASVLAPNGKPFTLASIGPAIATRAIMADLRAGMGEGVGGPPPFSKADRARFLQALDAALVRVKRGLA.

The protein belongs to the UPF0178 family.

The polypeptide is UPF0178 protein Sala_2376 (Sphingopyxis alaskensis (strain DSM 13593 / LMG 18877 / RB2256) (Sphingomonas alaskensis)).